The chain runs to 525 residues: Bifunctional pantoate ligase/cytidylate kinase (525 aa).

Positions 1–292 (MDNVPIIRTV…VGSARLIDNM (292 aa)) are pantoate--beta-alanine ligase. 44–51 (MGALHAGH) is an ATP binding site. Histidine 51 acts as the Proton donor in catalysis. Position 75 (glutamine 75) interacts with (R)-pantoate. Glutamine 75 contributes to the beta-alanine binding site. 162 to 165 (GQKD) contacts ATP. Glutamine 168 contributes to the (R)-pantoate binding site. Residues isoleucine 191 and 199-202 (LSSR) each bind ATP. The interval 293 to 525 (LLDARLPILA…LYQERFPDRA (233 aa)) is cytidylate kinase.

The protein in the N-terminal section; belongs to the pantothenate synthetase family. This sequence in the C-terminal section; belongs to the cytidylate kinase family. Type 1 subfamily.

It localises to the cytoplasm. It catalyses the reaction (R)-pantoate + beta-alanine + ATP = (R)-pantothenate + AMP + diphosphate + H(+). The catalysed reaction is CMP + ATP = CDP + ADP. The enzyme catalyses dCMP + ATP = dCDP + ADP. It functions in the pathway cofactor biosynthesis; (R)-pantothenate biosynthesis; (R)-pantothenate from (R)-pantoate and beta-alanine: step 1/1. Functionally, catalyzes the condensation of pantoate with beta-alanine in an ATP-dependent reaction via a pantoyl-adenylate intermediate. Catalyzes the transfer of a phosphate group from ATP to either CMP or dCMP to form CDP or dCDP and ADP, respectively. The sequence is that of Bifunctional pantoate ligase/cytidylate kinase from Acaryochloris marina (strain MBIC 11017).